We begin with the raw amino-acid sequence, 562 residues long: Tryptophan 2-monooxygenase (562 aa).

Ser54, Glu74, Arg76, Arg82, and Arg104 together coordinate FMN. Arg104 is a substrate binding site.

It belongs to the tryptophan 2-monooxygenase family. It depends on FMN as a cofactor.

It catalyses the reaction L-tryptophan + O2 = indole-3-acetamide + CO2 + H2O. The protein operates within plant hormone metabolism; auxin biosynthesis. In Pantoea agglomerans pv. gypsophilae (Erwinia herbicola), this protein is Tryptophan 2-monooxygenase (iaaM).